We begin with the raw amino-acid sequence, 496 residues long: Probable E3 ubiquitin-protein ligase XBOS32 (496 aa).

ANK repeat units follow at residues 50–79 (GRNSPLHYAAAQGHHEIVSLLLESGVEINL), 83–112 (RGQTALMQACQYGHWEVVQTLMLFNANVHR), 117–147 (NGGSALHFAALHGHARCLRLVLADYVPSMPN), 180–209 (GGLTPLHMAALNGHVECVQLLLDLGASVIE), and 223–252 (AGSTPLHYAACGGNAVCCQLLIARGASLSA). The RING-type zinc-finger motif lies at 321–368 (CAVCLEGSCSVAAEGCKHEFCTRCALYLCSTSYTSVSPAGAIPCPLCR).

It catalyses the reaction S-ubiquitinyl-[E2 ubiquitin-conjugating enzyme]-L-cysteine + [acceptor protein]-L-lysine = [E2 ubiquitin-conjugating enzyme]-L-cysteine + N(6)-ubiquitinyl-[acceptor protein]-L-lysine.. It participates in protein modification; protein ubiquitination. The sequence is that of Probable E3 ubiquitin-protein ligase XBOS32 (XBOS32) from Oryza sativa subsp. japonica (Rice).